We begin with the raw amino-acid sequence, 349 residues long: Hydroxymethylglutaryl-CoA synthase (349 aa).

2 residues coordinate (3S)-3-hydroxy-3-methylglutaryl-CoA: aspartate 30 and alanine 31. Glutamate 82 acts as the Proton donor/acceptor in catalysis. (3S)-3-hydroxy-3-methylglutaryl-CoA contacts are provided by cysteine 114 and threonine 155. Cysteine 114 functions as the Acyl-thioester intermediate in the catalytic mechanism. Position 203 (arginine 203) interacts with CoA. The (3S)-3-hydroxy-3-methylglutaryl-CoA site is built by threonine 205 and histidine 238. Catalysis depends on histidine 238, which acts as the Proton donor/acceptor. Residue lysine 243 coordinates CoA. (3S)-3-hydroxy-3-methylglutaryl-CoA-binding residues include asparagine 270 and serine 300.

Belongs to the thiolase-like superfamily. Archaeal HMG-CoA synthase family. In terms of assembly, interacts with acetoacetyl-CoA thiolase that catalyzes the precedent step in the pathway and with a DUF35 protein. The acetoacetyl-CoA thiolase/HMG-CoA synthase complex channels the intermediate via a fused CoA-binding site, which allows for efficient coupling of the endergonic thiolase reaction with the exergonic HMGCS reaction.

It carries out the reaction acetoacetyl-CoA + acetyl-CoA + H2O = (3S)-3-hydroxy-3-methylglutaryl-CoA + CoA + H(+). It functions in the pathway metabolic intermediate biosynthesis; (R)-mevalonate biosynthesis; (R)-mevalonate from acetyl-CoA: step 2/3. Its function is as follows. Catalyzes the condensation of acetyl-CoA with acetoacetyl-CoA to form 3-hydroxy-3-methylglutaryl-CoA (HMG-CoA). Functions in the mevalonate (MVA) pathway leading to isopentenyl diphosphate (IPP), a key precursor for the biosynthesis of isoprenoid compounds that are building blocks of archaeal membrane lipids. The chain is Hydroxymethylglutaryl-CoA synthase from Methanococcus maripaludis (strain C6 / ATCC BAA-1332).